Consider the following 145-residue polypeptide: D-aminoacyl-tRNA deacylase (145 aa).

The Gly-cisPro motif, important for rejection of L-amino acids motif lies at 137–138 (GP).

This sequence belongs to the DTD family. As to quaternary structure, homodimer.

It localises to the cytoplasm. The catalysed reaction is glycyl-tRNA(Ala) + H2O = tRNA(Ala) + glycine + H(+). The enzyme catalyses a D-aminoacyl-tRNA + H2O = a tRNA + a D-alpha-amino acid + H(+). Functionally, an aminoacyl-tRNA editing enzyme that deacylates mischarged D-aminoacyl-tRNAs. Also deacylates mischarged glycyl-tRNA(Ala), protecting cells against glycine mischarging by AlaRS. Acts via tRNA-based rather than protein-based catalysis; rejects L-amino acids rather than detecting D-amino acids in the active site. By recycling D-aminoacyl-tRNA to D-amino acids and free tRNA molecules, this enzyme counteracts the toxicity associated with the formation of D-aminoacyl-tRNA entities in vivo and helps enforce protein L-homochirality. In Rhodococcus opacus (strain B4), this protein is D-aminoacyl-tRNA deacylase.